The following is a 513-amino-acid chain: GMP synthase [glutamine-hydrolyzing] (513 aa).

The 190-residue stretch at 9-198 folds into the Glutamine amidotransferase type-1 domain; the sequence is LILVLDFGSQ…VRRVCDCRGQ (190 aa). The Nucleophile role is filled by Cys86. Residues His172 and Glu174 contribute to the active site. Residues 199 to 388 enclose the GMPS ATP-PPase domain; it reads WTMENFIEIE…LGIPEHLVWR (190 aa). 226–232 is a binding site for ATP; sequence SGGVDSS.

As to quaternary structure, homodimer.

The catalysed reaction is XMP + L-glutamine + ATP + H2O = GMP + L-glutamate + AMP + diphosphate + 2 H(+). Its pathway is purine metabolism; GMP biosynthesis; GMP from XMP (L-Gln route): step 1/1. In terms of biological role, catalyzes the synthesis of GMP from XMP. The polypeptide is GMP synthase [glutamine-hydrolyzing] (Staphylococcus aureus (strain USA300)).